The chain runs to 193 residues: Potassium-transporting ATPase KdpC subunit (193 aa).

The helical transmembrane segment at F11–A31 threads the bilayer.

It belongs to the KdpC family. As to quaternary structure, the system is composed of three essential subunits: KdpA, KdpB and KdpC.

It is found in the cell membrane. Its function is as follows. Part of the high-affinity ATP-driven potassium transport (or Kdp) system, which catalyzes the hydrolysis of ATP coupled with the electrogenic transport of potassium into the cytoplasm. This subunit acts as a catalytic chaperone that increases the ATP-binding affinity of the ATP-hydrolyzing subunit KdpB by the formation of a transient KdpB/KdpC/ATP ternary complex. The sequence is that of Potassium-transporting ATPase KdpC subunit from Caldanaerobacter subterraneus subsp. tengcongensis (strain DSM 15242 / JCM 11007 / NBRC 100824 / MB4) (Thermoanaerobacter tengcongensis).